Consider the following 179-residue polypeptide: Ribosome maturation factor RimM (179 aa).

In terms of domain architecture, PRC barrel spans 95 to 174; it reads KDEFFYFDIL…QIFCTQDAFL (80 aa).

It belongs to the RimM family. Binds ribosomal protein uS19.

It localises to the cytoplasm. An accessory protein needed during the final step in the assembly of 30S ribosomal subunit, possibly for assembly of the head region. Essential for efficient processing of 16S rRNA. May be needed both before and after RbfA during the maturation of 16S rRNA. It has affinity for free ribosomal 30S subunits but not for 70S ribosomes. This chain is Ribosome maturation factor RimM, found in Campylobacter jejuni subsp. jejuni serotype O:6 (strain 81116 / NCTC 11828).